A 176-amino-acid polypeptide reads, in one-letter code: Small ribosomal subunit protein uS5 (176 aa).

One can recognise an S5 DRBM domain in the interval 11 to 74; it reads LSEVLVDVNR…QAAKKKMMKV (64 aa).

The protein belongs to the universal ribosomal protein uS5 family. Part of the 30S ribosomal subunit. Contacts proteins S4 and S8.

With S4 and S12 plays an important role in translational accuracy. Functionally, located at the back of the 30S subunit body where it stabilizes the conformation of the head with respect to the body. The polypeptide is Small ribosomal subunit protein uS5 (Rickettsia bellii (strain RML369-C)).